The following is a 387-amino-acid chain: Hydroxycarboxylic acid receptor 3 (387 aa).

The Extracellular segment spans residues 1–28; sequence MNRHHLQDHFLEIDKKNCCVFRDDFIAK. A helical membrane pass occupies residues 29-50; the sequence is VLPPVLGLEFIFGLLGNGLALW. Over 51–63 the chain is Cytoplasmic; it reads IFCFHLKSWKSSR. A helical membrane pass occupies residues 64-85; the sequence is IFLFNLAVADFLLIICLPFVMD. Residues 86–102 lie on the Extracellular side of the membrane; the sequence is YYVRRSDWKFGDIPCRL. Cys100 and Cys177 are joined by a disulfide. A helical membrane pass occupies residues 103 to 123; sequence VLFMFAMNRQGSIIFLTVVAV. Over 124–142 the chain is Cytoplasmic; it reads DRYFRVVHPHHALNKISNW. A helical membrane pass occupies residues 143-163; sequence TAAIISCLLWGITVGLTVHLL. Residues 164 to 194 are Extracellular-facing; it reads KKKLLIQNGTANVCISFSICHTFRWHEAMFL. The helical transmembrane segment at 195–209 threads the bilayer; that stretch reads LEFFLPLGIILFCSA. Residues 210-236 lie on the Cytoplasmic side of the membrane; the sequence is RIIWSLRQRQMDRHAKIKRAITFIMVV. Residues 237 to 256 form a helical membrane-spanning segment; the sequence is AIVFVICFLPSVVVRIHIFW. Topologically, residues 257 to 273 are extracellular; it reads LLHTSGTQNCEVYRSVD. Residues 274-298 traverse the membrane as a helical segment; that stretch reads LAFFITLSFTYMNSMLDPVVYYFSS. Residues 299-387 lie on the Cytoplasmic side of the membrane; the sequence is PSFPNFFSTL…LEKQLGCCIE (89 aa). Positions 319-343 are disordered; that stretch reads GEPDNNRSTSVELTGDPNKTRGAPE.

It belongs to the G-protein coupled receptor 1 family. In terms of tissue distribution, expression largely restricted to adipose tissue and spleen.

It localises to the cell membrane. Functionally, receptor for 3-OH-octanoid acid mediates a negative feedback regulation of adipocyte lipolysis to counteract prolipolytic influences under conditions of physiological or pathological increases in beta-oxidation rates. Acts as a low affinity receptor for nicotinic acid. This pharmacological effect requires nicotinic acid doses that are much higher than those provided by a normal diet. This chain is Hydroxycarboxylic acid receptor 3 (HCAR3), found in Homo sapiens (Human).